The sequence spans 161 residues: Insulin-like growth factor 1, juvenile form (161 aa).

Positions 45–73 are b; the sequence is GPETLCGAELVDTLQFVCGDRGFYFSKPT. Cystine bridges form between cysteine 50–cysteine 92, cysteine 62–cysteine 105, and cysteine 91–cysteine 96. Residues 74-85 form a c region; it reads GYGPSSRRSHNR. The tract at residues 86–106 is a; sequence GIVDECCFQSCELRRLEMYCA. Positions 107–114 are d; it reads PVKPGKTP. The segment at 111–161 is disordered; the sequence is GKTPRSVRAQRHTDSPRTAKKPLPGQSHSSYKEVHQKNSSRGNTGGRNYRI. A propeptide spans 115–161 (e peptide); the sequence is RSVRAQRHTDSPRTAKKPLPGQSHSSYKEVHQKNSSRGNTGGRNYRI.

Belongs to the insulin family.

It is found in the secreted. Functionally, the insulin-like growth factors, isolated from plasma, are structurally and functionally related to insulin but have a much higher growth-promoting activity. Acts as a ligand for IGF1R. Binds to the alpha subunit of IGF1R, leading to the activation of the intrinsic tyrosine kinase activity which autophosphorylates tyrosine residues in the beta subunit thus initiatiating a cascade of down-stream signaling events leading to activation of the PI3K-AKT/PKB and the Ras-MAPK pathways. Binds to integrins. Its binding to integrins and subsequent ternary complex formation with integrins and IGFR1 are essential for IGF1 signaling. In Cyprinus carpio (Common carp), this protein is Insulin-like growth factor 1, juvenile form.